We begin with the raw amino-acid sequence, 454 residues long: MSDNDTIVAQATPPGRGGVGILRISGLKAREVAETVLGKLPKPRYADYLPFKDADGSVLDQGIALWFPGPNSFTGEDVLELQGHGGPVILDLLLKRILTIPDLRIARPGEFSERAFLNDKLDLAQAEAIADLIDASSEQAARSALNSLQGAFSARVNHLVEALTHLRIYVEAAIDFPDEEIDFLSDGKIEAQLNDVIADLDAVRAEARQGSLLREGMKVVIAGRPNAGKSSLLNALAGREAAIVTDIAGTTRDVLREHIHIDGMPLHIIDTAGLREASDEVERIGIERAWQEIEQADRVLFMVDGTTTDAVDPAEIWPEFIARLPAKLPITVVRNKADITGETLGMSEVNGHALIRLSARTGEGVDVLRNHLKQSMGFDTNMEGGFLARRRHLQALEQAAEHLQQGKAQLLGAWAGELLAEELRLAQQNLSEITGEFTSDDLLGRIFSSFCIGK.

(6S)-5-formyl-5,6,7,8-tetrahydrofolate-binding residues include R23, E80, and K120. The 162-residue stretch at 216–377 (GMKVVIAGRP…LRNHLKQSMG (162 aa)) folds into the TrmE-type G domain. A K(+)-binding site is contributed by N226. GTP contacts are provided by residues 226–231 (NAGKSS), 245–251 (TDIAGTT), 270–273 (DTAG), 335–338 (NKAD), and 358–360 (SAR). S230 contributes to the Mg(2+) binding site. Residues T245, I247, and T250 each coordinate K(+). T251 lines the Mg(2+) pocket. K454 serves as a coordination point for (6S)-5-formyl-5,6,7,8-tetrahydrofolate.

It belongs to the TRAFAC class TrmE-Era-EngA-EngB-Septin-like GTPase superfamily. TrmE GTPase family. Homodimer. Heterotetramer of two MnmE and two MnmG subunits. It depends on K(+) as a cofactor.

The protein resides in the cytoplasm. In terms of biological role, exhibits a very high intrinsic GTPase hydrolysis rate. Involved in the addition of a carboxymethylaminomethyl (cmnm) group at the wobble position (U34) of certain tRNAs, forming tRNA-cmnm(5)s(2)U34. The chain is tRNA modification GTPase MnmE from Escherichia coli O17:K52:H18 (strain UMN026 / ExPEC).